The following is a 404-amino-acid chain: Deoxyguanosinetriphosphate triphosphohydrolase-like protein 1 (404 aa).

The HD domain occupies 75 to 219 (RLTHSIEVAQ…AAIADDIAYN (145 aa)).

It belongs to the dGTPase family. Type 2 subfamily.

The protein is Deoxyguanosinetriphosphate triphosphohydrolase-like protein 1 of Mesorhizobium japonicum (strain LMG 29417 / CECT 9101 / MAFF 303099) (Mesorhizobium loti (strain MAFF 303099)).